Here is a 344-residue protein sequence, read N- to C-terminus: Ketol-acid reductoisomerase (NADP(+)) (344 aa).

The KARI N-terminal Rossmann domain maps to 1 to 181 (MATMYYEQNI…GAARGGLLET (181 aa)). Residues 25 to 28 (YGSQ), R48, S52, and 82 to 85 (DERQ) contribute to the NADP(+) site. H107 is an active-site residue. G133 contacts NADP(+). The region spanning 182-327 (TFKEETETDL…AKLREMMPFI (146 aa)) is the KARI C-terminal knotted domain. 4 residues coordinate Mg(2+): D190, E194, E226, and E230. S251 is a substrate binding site.

It belongs to the ketol-acid reductoisomerase family. Mg(2+) is required as a cofactor.

The catalysed reaction is (2R)-2,3-dihydroxy-3-methylbutanoate + NADP(+) = (2S)-2-acetolactate + NADPH + H(+). It catalyses the reaction (2R,3R)-2,3-dihydroxy-3-methylpentanoate + NADP(+) = (S)-2-ethyl-2-hydroxy-3-oxobutanoate + NADPH + H(+). It participates in amino-acid biosynthesis; L-isoleucine biosynthesis; L-isoleucine from 2-oxobutanoate: step 2/4. It functions in the pathway amino-acid biosynthesis; L-valine biosynthesis; L-valine from pyruvate: step 2/4. Involved in the biosynthesis of branched-chain amino acids (BCAA). Catalyzes an alkyl-migration followed by a ketol-acid reduction of (S)-2-acetolactate (S2AL) to yield (R)-2,3-dihydroxy-isovalerate. In the isomerase reaction, S2AL is rearranged via a Mg-dependent methyl migration to produce 3-hydroxy-3-methyl-2-ketobutyrate (HMKB). In the reductase reaction, this 2-ketoacid undergoes a metal-dependent reduction by NADPH to yield (R)-2,3-dihydroxy-isovalerate. In Lysinibacillus sphaericus (strain C3-41), this protein is Ketol-acid reductoisomerase (NADP(+)).